The chain runs to 52 residues: Ornatin-C (52 aa).

The short motif at 42–44 (RGD) is the Cell attachment site element.

Belongs to the ornatin family.

The protein localises to the secreted. Functionally, potent inhibitor of fibrinogen interaction with platelet receptors expressed on glycoprotein IIb-IIIa complex. May prevent blood from clotting during either feeding and/or storage of ingested blood. This is Ornatin-C from Placobdella ornata (Turtle leech).